A 523-amino-acid polypeptide reads, in one-letter code: Leghemoglobin reductase (523 aa).

A mitochondrion-targeting transit peptide spans 1 to 30; it reads MAMASLARRKAYAVVSSSRSSVFLTSLRGF. Residues 66 to 75, K84, G148, and 177 to 179 each bind FAD; these read EKRGTLGGTC and TGS. C75 and C80 are disulfide-bonded. Residues 214–221, E237, V271, and G306 each bind NAD(+); that span reads GAGYIGLE. FAD is bound by residues D347 and 353 to 356; that span reads MLAH. The active-site Proton acceptor is H479.

Belongs to the class-I pyridine nucleotide-disulfide oxidoreductase family. As to quaternary structure, homodimer. Requires FAD as cofactor.

Its subcellular location is the mitochondrion. The catalysed reaction is 2 Fe(III)-[leghemoglobin] + NADH = 2 Fe(II)-[leghemoglobin] + NAD(+) + H(+). It catalyses the reaction 2 Fe(III)-[leghemoglobin] + NADPH = 2 Fe(II)-[leghemoglobin] + NADP(+) + H(+). In terms of biological role, reduces ferric leghemoglobin (Lb) to ferrous Lb. In Vigna unguiculata (Cowpea), this protein is Leghemoglobin reductase (FLBR).